The following is a 394-amino-acid chain: NAD(P)H-quinone oxidoreductase subunit H (394 aa).

It belongs to the complex I 49 kDa subunit family. NDH-1 can be composed of about 15 different subunits; different subcomplexes with different compositions have been identified which probably have different functions.

The protein localises to the cellular thylakoid membrane. It catalyses the reaction a plastoquinone + NADH + (n+1) H(+)(in) = a plastoquinol + NAD(+) + n H(+)(out). The enzyme catalyses a plastoquinone + NADPH + (n+1) H(+)(in) = a plastoquinol + NADP(+) + n H(+)(out). NDH-1 shuttles electrons from an unknown electron donor, via FMN and iron-sulfur (Fe-S) centers, to quinones in the respiratory and/or the photosynthetic chain. The immediate electron acceptor for the enzyme in this species is believed to be plastoquinone. Couples the redox reaction to proton translocation, and thus conserves the redox energy in a proton gradient. Cyanobacterial NDH-1 also plays a role in inorganic carbon-concentration. The polypeptide is NAD(P)H-quinone oxidoreductase subunit H (Parasynechococcus marenigrum (strain WH8102)).